We begin with the raw amino-acid sequence, 336 residues long: tRNA N6-adenosine threonylcarbamoyltransferase (336 aa).

The Fe cation site is built by His111 and His115. Substrate-binding positions include 134-138 (VVSGG), Asp167, Gly180, Asp184, and Asn272. Residue Asp300 coordinates Fe cation.

It belongs to the KAE1 / TsaD family. Requires Fe(2+) as cofactor.

The protein localises to the cytoplasm. The catalysed reaction is L-threonylcarbamoyladenylate + adenosine(37) in tRNA = N(6)-L-threonylcarbamoyladenosine(37) in tRNA + AMP + H(+). In terms of biological role, required for the formation of a threonylcarbamoyl group on adenosine at position 37 (t(6)A37) in tRNAs that read codons beginning with adenine. Is involved in the transfer of the threonylcarbamoyl moiety of threonylcarbamoyl-AMP (TC-AMP) to the N6 group of A37, together with TsaE and TsaB. TsaD likely plays a direct catalytic role in this reaction. The chain is tRNA N6-adenosine threonylcarbamoyltransferase from Caldicellulosiruptor saccharolyticus (strain ATCC 43494 / DSM 8903 / Tp8T 6331).